A 274-amino-acid chain; its full sequence is Cytochrome b-c1 complex subunit Rieske, mitochondrial (274 aa).

The Mitochondrial matrix portion of the chain corresponds to 79–103 (SHTDIKVPDFSDYRRPEVLDSTKSS). Residues 104–140 (KESSEARKGFSYLVTATTTVGVAYAAKNVVSQFVSSM) traverse the membrane as a helical segment. The Mitochondrial intermembrane segment spans residues 141-274 (SASADVLAMS…FTSDDMVIVG (134 aa)). A Rieske domain is found at 187–272 (EAAVEVSQLR…YEFTSDDMVI (86 aa)). Cysteine 217, histidine 219, cysteine 236, histidine 239, and serine 241 together coordinate [2Fe-2S] cluster. Cysteines 222 and 238 form a disulfide.

Belongs to the Rieske iron-sulfur protein family. As to quaternary structure, component of the ubiquinol-cytochrome c oxidoreductase (cytochrome b-c1 complex, complex III, CIII), a multisubunit enzyme composed of 11 subunits. The complex is composed of 3 respiratory subunits cytochrome b, cytochrome c1 and Rieske protein UQCRFS1, 2 core protein subunits UQCRC1/QCR1 and UQCRC2/QCR2, and 6 low-molecular weight protein subunits UQCRH/QCR6, UQCRB/QCR7, UQCRQ/QCR8, UQCR10/QCR9, UQCR11/QCR10 and subunit 9, the cleavage product of Rieske protein UQCRFS1. The complex exists as an obligatory dimer and forms supercomplexes (SCs) in the inner mitochondrial membrane with NADH-ubiquinone oxidoreductase (complex I, CI) and cytochrome c oxidase (complex IV, CIV), resulting in different assemblies (supercomplex SCI(1)III(2)IV(1) and megacomplex MCI(2)III(2)IV(2)). Incorporation of the Rieske protein UQCRFS1 is the penultimate step in complex III assembly. Interacts with TTC19, which is involved in the clearance of UQCRFS1 fragments. Component of the ubiquinol-cytochrome c oxidoreductase (cytochrome b-c1 complex, complex III, CIII). Subunit 9 corresponds to the mitochondrial targeting sequence (MTS) of Rieske protein UQCRFS1. It is retained after processing and incorporated inside complex III, where it remains bound to the complex and localizes between the 2 core subunits UQCRC1/QCR1 and UQCRC2/QCR2. Requires [2Fe-2S] cluster as cofactor. In terms of processing, proteolytic processing is necessary for the correct insertion of UQCRFS1 in the complex III dimer. Several fragments are generated during UQCRFS1 insertion, most probably due to the endogenous matrix-processing peptidase (MPP) activity of the 2 core protein subunits UQCRC1/QCR1 and UQCRC2/QCR2, which are homologous to the 2 mitochondrial-processing peptidase (MPP) subunits beta-MPP and alpha-MPP respectively. The action of the protease is also necessary for the clearance of the UQCRFS1 fragments.

The protein localises to the mitochondrion inner membrane. It catalyses the reaction a quinol + 2 Fe(III)-[cytochrome c](out) = a quinone + 2 Fe(II)-[cytochrome c](out) + 2 H(+)(out). Functionally, component of the ubiquinol-cytochrome c oxidoreductase, a multisubunit transmembrane complex that is part of the mitochondrial electron transport chain which drives oxidative phosphorylation. The respiratory chain contains 3 multisubunit complexes succinate dehydrogenase (complex II, CII), ubiquinol-cytochrome c oxidoreductase (cytochrome b-c1 complex, complex III, CIII) and cytochrome c oxidase (complex IV, CIV), that cooperate to transfer electrons derived from NADH and succinate to molecular oxygen, creating an electrochemical gradient over the inner membrane that drives transmembrane transport and the ATP synthase. The cytochrome b-c1 complex catalyzes electron transfer from ubiquinol to cytochrome c, linking this redox reaction to translocation of protons across the mitochondrial inner membrane, with protons being carried across the membrane as hydrogens on the quinol. In the process called Q cycle, 2 protons are consumed from the matrix, 4 protons are released into the intermembrane space and 2 electrons are passed to cytochrome c. The Rieske protein is a catalytic core subunit containing a [2Fe-2S] iron-sulfur cluster. It cycles between 2 conformational states during catalysis to transfer electrons from the quinol bound in the Q(0) site in cytochrome b to cytochrome c1. Incorporation of UQCRFS1 is the penultimate step in complex III assembly. Its function is as follows. Component of the ubiquinol-cytochrome c oxidoreductase (cytochrome b-c1 complex, complex III, CIII). UQCRFS1 undergoes proteolytic processing once it is incorporated in the complex III dimer. One of the fragments, called subunit 9, corresponds to its mitochondrial targeting sequence (MTS). The proteolytic processing is necessary for the correct insertion of UQCRFS1 in the complex III dimer, but the persistence of UQCRFS1-derived fragments may prevent newly imported UQCRFS1 to be processed and assembled into complex III and is detrimental for the complex III structure and function. The polypeptide is Cytochrome b-c1 complex subunit Rieske, mitochondrial (UQCRFS1) (Bos taurus (Bovine)).